Consider the following 243-residue polypeptide: MAPRKPKVVSVTKKKKVVEETIKVTVTEEGDPCVITETANDQETQDLTFSIPVGENVTTVEIPVEVPDERSLPVGENVTTVKIPVDDRDESSPQPPETPVEVRDEPSPQPPETPASKSEGTLKKTDKVEKKQENKKKKKKKKRDDLAGDEYRRYVYKVMKQVHPDLGITSKAMTVVNMFMGDMFERIAQEAARLSDYTKRRTLSSREIEAAVRLVLPGELSRHAVAEGSKAVSNFVGYDSRKR.

At A2 the chain carries N,N,N-trimethylalanine; alternate. At A2 the chain carries N,N-dimethylalanine; alternate. A2 bears the N-methylalanine; alternate mark. Residues 67–145 are disordered; it reads PDERSLPVGE…KKKKKKKRDD (79 aa). Residues 120–132 show a composition bias toward basic and acidic residues; the sequence is GTLKKTDKVEKKQ. Residues 133 to 142 are compositionally biased toward basic residues; the sequence is ENKKKKKKKK.

It belongs to the histone H2B family. The nucleosome is a histone octamer containing two molecules each of H2A, H2B, H3 and H4 assembled in one H3-H4 heterotetramer and two H2A-H2B heterodimers. The octamer wraps approximately 147 bp of DNA. In terms of processing, can be acetylated to form H2BK6ac.

The protein localises to the nucleus. It is found in the chromosome. Functionally, core component of nucleosome. Nucleosomes wrap and compact DNA into chromatin, limiting DNA accessibility to the cellular machineries which require DNA as a template. Histones thereby play a central role in transcription regulation, DNA repair, DNA replication and chromosomal stability. DNA accessibility is regulated via a complex set of post-translational modifications of histones, also called histone code, and nucleosome remodeling. The protein is Histone H2B.2 of Arabidopsis thaliana (Mouse-ear cress).